Consider the following 107-residue polypeptide: Sulfurtransferase Alvin_2599 (107 aa).

The Rhodanese domain occupies 16–104 (DTEDVLLVDI…WARHGLPIVA (89 aa)). Residue C64 is the Cysteine persulfide intermediate of the active site.

As to quaternary structure, monomer.

Its subcellular location is the cytoplasm. The protein operates within energy metabolism; sulfur metabolism. In terms of biological role, sulfur carrier protein involved in sulfur trafficking for oxidative dissimilatory sulfur metabolism. Component of a sulfur relay system that starts with the sulfur-mobilizing rhodanese-like protein Rhd_2599 (Alvin_2599), which transfers the sulfur from a low-molecular-weight thiol, maybe glutathione, to the TusA protein (Alvin_2600); TusA serves as the sulfur donor for DsrEFH, which persulfurates DsrC; persulfurated DsrC very probably serves as a direct substrate for reverse-acting sulfite reductase, DsrAB. Is able to catalyze the sulfur transfer reaction from thiosulfate or glutathione (GSSH) to cyanide in vitro, however, thiosulfate is unlikely an in vivo substrate. The sequence is that of Sulfurtransferase Alvin_2599 from Allochromatium vinosum (strain ATCC 17899 / DSM 180 / NBRC 103801 / NCIMB 10441 / D) (Chromatium vinosum).